The primary structure comprises 204 residues: Large ribosomal subunit protein eL15 (204 aa).

It belongs to the eukaryotic ribosomal protein eL15 family. Component of the large ribosomal subunit.

It localises to the cytoplasm. Component of the large ribosomal subunit. The ribosome is a large ribonucleoprotein complex responsible for the synthesis of proteins in the cell. In Cyprinus carpio (Common carp), this protein is Large ribosomal subunit protein eL15 (rpl15).